The primary structure comprises 21 residues: Major outer membrane protein P44 (21 aa).

Monomer.

The protein localises to the cell outer membrane. The protein is Major outer membrane protein P44 of Mannheimia haemolytica (Pasteurella haemolytica).